The chain runs to 428 residues: Cholecystokinin receptor type A (428 aa).

The Extracellular segment spans residues Met-1–Pro-41. N-linked (GlcNAc...) asparagine glycosylation is found at Asn-10 and Asn-24. The cysteines at positions 18 and 29 are disulfide-linked. A helical membrane pass occupies residues Ala-42–Ile-67. The Cytoplasmic portion of the chain corresponds to Arg-68 to Asn-77. The helical transmembrane segment at Ile-78 to Leu-104 threads the bilayer. At Lys-105 to Lys-115 the chain is on the extracellular side. The cysteines at positions 114 and 196 are disulfide-linked. A helical transmembrane segment spans residues Thr-116–Leu-137. At Glu-138–His-157 the chain is on the cytoplasmic side. The chain crosses the membrane as a helical span at residues Ala-158 to Ile-178. Over Tyr-179–His-210 the chain is Extracellular. Asn-190 is a glycosylation site (N-linked (GlcNAc...) asparagine). A helical transmembrane segment spans residues Thr-211 to Leu-234. Residues Glu-235 to Arg-313 are Cytoplasmic-facing. Positions Ala-250 to Cys-269 are disordered. A helical membrane pass occupies residues Met-314–Ala-334. The Extracellular segment spans residues Trp-335–Gly-349. Residues Thr-350 to Met-373 traverse the membrane as a helical segment. Residues Asn-374–Pro-428 lie on the Cytoplasmic side of the membrane. Residue Cys-387 is the site of S-palmitoyl cysteine attachment. The segment at Pro-393–Pro-428 is disordered. Over residues Thr-409–Ser-422 the composition is skewed to polar residues.

Belongs to the G-protein coupled receptor 1 family.

The protein localises to the cell membrane. Receptor for cholecystokinin. Mediates pancreatic growth and enzyme secretion, smooth muscle contraction of the gall bladder and stomach. Has a 1000-fold higher affinity for CCK rather than for gastrin. It modulates feeding and dopamine-induced behavior in the central and peripheral nervous system. This receptor mediates its action by association with G proteins that activate a phosphatidylinositol-calcium second messenger system. The polypeptide is Cholecystokinin receptor type A (CCKAR) (Canis lupus familiaris (Dog)).